We begin with the raw amino-acid sequence, 153 residues long: Myoglobin (153 aa).

The Globin domain occupies 1-147 (MATACVKSLE…FSDECLDHLK (147 aa)). Histidine 94 contacts heme b.

It belongs to the globin family. As to quaternary structure, homodimer; disulfide-linked. In terms of processing, the N-terminus is blocked. As to expression, body wall globin is localized in cellular compartments belonging to the hypodermis, the dorsal, ventral and lateral cords, the nerve ring, and body wall muscle.

It localises to the cytoplasm. Its function is as follows. High oxygen affinity. Probably supplies oxygen needed for muscle activity. The chain is Myoglobin from Ascaris suum (Pig roundworm).